The following is a 159-amino-acid chain: 2-C-methyl-D-erythritol 2,4-cyclodiphosphate synthase (159 aa).

A divalent metal cation-binding residues include Asp8 and His10. Residues 8–10 (DVH) and 34–35 (HS) each bind 4-CDP-2-C-methyl-D-erythritol 2-phosphate. His42 contacts a divalent metal cation. Residues 56–58 (DIG), 61–65 (FPDTD), 100–106 (AQAPKML), 132–135 (TTTE), Phe139, and Arg142 contribute to the 4-CDP-2-C-methyl-D-erythritol 2-phosphate site.

The protein belongs to the IspF family. Homotrimer. A divalent metal cation serves as cofactor.

It catalyses the reaction 4-CDP-2-C-methyl-D-erythritol 2-phosphate = 2-C-methyl-D-erythritol 2,4-cyclic diphosphate + CMP. Its pathway is isoprenoid biosynthesis; isopentenyl diphosphate biosynthesis via DXP pathway; isopentenyl diphosphate from 1-deoxy-D-xylulose 5-phosphate: step 4/6. Functionally, involved in the biosynthesis of isopentenyl diphosphate (IPP) and dimethylallyl diphosphate (DMAPP), two major building blocks of isoprenoid compounds. Catalyzes the conversion of 4-diphosphocytidyl-2-C-methyl-D-erythritol 2-phosphate (CDP-ME2P) to 2-C-methyl-D-erythritol 2,4-cyclodiphosphate (ME-CPP) with a corresponding release of cytidine 5-monophosphate (CMP). This Salmonella arizonae (strain ATCC BAA-731 / CDC346-86 / RSK2980) protein is 2-C-methyl-D-erythritol 2,4-cyclodiphosphate synthase.